The primary structure comprises 470 residues: MTGKTLYDKLWDAHVVRTEPDGTALLYIDRHLVHEVTSPQAFEGLRLAGRKPWRTDTVLAVPDHNVPTTHRDQGISDPVSRIQVETLDANVHEFGITFFPMNDVRQGIVHVIGPEQGATLPGMTVVCGDSHTSTHGAFGALAFGIGTSEVEHVLATQCLLQKKMKNMLVSVDGRVGPGVTAKDIVLAIIGEIGTAGGTGYAIEFGGEAIRDLSMEGRMTVCNMAIEAGARAGMVAVDETTIEYVKGRTYAPTGEQWESAVAAWRELNSDADARFDRVVRLDATAIAPQVSWGTSPEMVVPVTGRVPDPAEATDPVKASGMKRALEYMGLAANTPIEQIAIDKVFIGSCTNSRIEDLRAAAAVVRGRKVAGNVKLAMVVPGSGLVKQQAEQEGLDQVFLEAGFEWREPGCSMCLAMNADRLEPGERCASTSNRNFEGRQGQGGRTHLVSPAMAAAAAVTGHFTDVRQLAQS.

Cysteine 348, cysteine 409, and cysteine 412 together coordinate [4Fe-4S] cluster.

Belongs to the aconitase/IPM isomerase family. LeuC type 1 subfamily. As to quaternary structure, heterodimer of LeuC and LeuD. The cofactor is [4Fe-4S] cluster.

It catalyses the reaction (2R,3S)-3-isopropylmalate = (2S)-2-isopropylmalate. It functions in the pathway amino-acid biosynthesis; L-leucine biosynthesis; L-leucine from 3-methyl-2-oxobutanoate: step 2/4. Its function is as follows. Catalyzes the isomerization between 2-isopropylmalate and 3-isopropylmalate, via the formation of 2-isopropylmaleate. This chain is 3-isopropylmalate dehydratase large subunit, found in Thioalkalivibrio sulfidiphilus (strain HL-EbGR7).